The chain runs to 546 residues: Probable protein kinase UbiB (546 aa).

The region spanning 124 to 502 (DFDIQPLASA…HVRQSQSRYL (379 aa)) is the Protein kinase domain. Residues 130–138 (LASASIAQV) and K153 contribute to the ATP site. D288 (proton acceptor) is an active-site residue. Transmembrane regions (helical) follow at residues 501–521 (YLLGIGATLLLSGSFLLVNRP) and 522–542 (EWGLMPSWLMVGGVVVWLVGW).

This sequence belongs to the ABC1 family. UbiB subfamily.

The protein resides in the cell inner membrane. It participates in cofactor biosynthesis; ubiquinone biosynthesis [regulation]. In terms of biological role, is probably a protein kinase regulator of UbiI activity which is involved in aerobic coenzyme Q (ubiquinone) biosynthesis. The sequence is that of Probable protein kinase UbiB from Salmonella gallinarum (strain 287/91 / NCTC 13346).